The chain runs to 227 residues: 7-cyano-7-deazaguanine synthase (227 aa).

7 to 17 (VSGGMDSLVAT) serves as a coordination point for ATP. The Zn(2+) site is built by Cys-187, Cys-195, Cys-198, and Cys-201.

This sequence belongs to the QueC family. It depends on Zn(2+) as a cofactor.

The catalysed reaction is 7-carboxy-7-deazaguanine + NH4(+) + ATP = 7-cyano-7-deazaguanine + ADP + phosphate + H2O + H(+). The protein operates within purine metabolism; 7-cyano-7-deazaguanine biosynthesis. Its function is as follows. Catalyzes the ATP-dependent conversion of 7-carboxy-7-deazaguanine (CDG) to 7-cyano-7-deazaguanine (preQ(0)). The sequence is that of 7-cyano-7-deazaguanine synthase from Chlorobaculum parvum (strain DSM 263 / NCIMB 8327) (Chlorobium vibrioforme subsp. thiosulfatophilum).